Consider the following 284-residue polypeptide: 4-hydroxy-3-methylbut-2-enyl diphosphate reductase (284 aa).

C12 provides a ligand contact to [4Fe-4S] cluster. (2E)-4-hydroxy-3-methylbut-2-enyl diphosphate is bound by residues H40 and H72. The dimethylallyl diphosphate site is built by H40 and H72. H40 and H72 together coordinate isopentenyl diphosphate. [4Fe-4S] cluster is bound at residue C94. Residue H122 participates in (2E)-4-hydroxy-3-methylbut-2-enyl diphosphate binding. H122 lines the dimethylallyl diphosphate pocket. H122 contacts isopentenyl diphosphate. E124 (proton donor) is an active-site residue. T161 contributes to the (2E)-4-hydroxy-3-methylbut-2-enyl diphosphate binding site. Position 193 (C193) interacts with [4Fe-4S] cluster. (2E)-4-hydroxy-3-methylbut-2-enyl diphosphate-binding residues include S221, N223, and S264. The dimethylallyl diphosphate site is built by S221, N223, and S264. Isopentenyl diphosphate contacts are provided by S221, N223, and S264.

This sequence belongs to the IspH family. [4Fe-4S] cluster is required as a cofactor.

The enzyme catalyses isopentenyl diphosphate + 2 oxidized [2Fe-2S]-[ferredoxin] + H2O = (2E)-4-hydroxy-3-methylbut-2-enyl diphosphate + 2 reduced [2Fe-2S]-[ferredoxin] + 2 H(+). It carries out the reaction dimethylallyl diphosphate + 2 oxidized [2Fe-2S]-[ferredoxin] + H2O = (2E)-4-hydroxy-3-methylbut-2-enyl diphosphate + 2 reduced [2Fe-2S]-[ferredoxin] + 2 H(+). It functions in the pathway isoprenoid biosynthesis; dimethylallyl diphosphate biosynthesis; dimethylallyl diphosphate from (2E)-4-hydroxy-3-methylbutenyl diphosphate: step 1/1. Its pathway is isoprenoid biosynthesis; isopentenyl diphosphate biosynthesis via DXP pathway; isopentenyl diphosphate from 1-deoxy-D-xylulose 5-phosphate: step 6/6. In terms of biological role, catalyzes the conversion of 1-hydroxy-2-methyl-2-(E)-butenyl 4-diphosphate (HMBPP) into a mixture of isopentenyl diphosphate (IPP) and dimethylallyl diphosphate (DMAPP). Acts in the terminal step of the DOXP/MEP pathway for isoprenoid precursor biosynthesis. In Dehalococcoides mccartyi (strain CBDB1), this protein is 4-hydroxy-3-methylbut-2-enyl diphosphate reductase.